Reading from the N-terminus, the 150-residue chain is UPF0178 protein Sbal_1771 (150 aa).

The protein belongs to the UPF0178 family.

In Shewanella baltica (strain OS155 / ATCC BAA-1091), this protein is UPF0178 protein Sbal_1771.